The chain runs to 222 residues: MSVLLNRDVLTSKIAEALKAGKPRRFRQSVELIVVLRELDLSKPENRINLLVELPHPPKANKIAAFAHGVFEVNAKNAGVDAIITRDQIESLSGNKRAIRKLAKQYDFFIAPPDLMPLLGRVVGPIFGPRGKMPEVVPPNVDVKSVVERLRRSVRVRIRNEPVIKVRVGAEGQDQKEILANILTVLEEINRKFSLKQYLKEIYVKKTMGPPIKIRAVEVLSR.

Belongs to the universal ribosomal protein uL1 family. As to quaternary structure, part of the 50S ribosomal subunit.

Binds directly to 23S rRNA. Probably involved in E site tRNA release. Its function is as follows. Protein L1 is also a translational repressor protein, it controls the translation of its operon by binding to its mRNA. The polypeptide is Large ribosomal subunit protein uL1 (Pyrobaculum arsenaticum (strain DSM 13514 / JCM 11321 / PZ6)).